Consider the following 298-residue polypeptide: ATP synthase gamma chain (298 aa).

It belongs to the ATPase gamma chain family. In terms of assembly, F-type ATPases have 2 components, CF(1) - the catalytic core - and CF(0) - the membrane proton channel. CF(1) has five subunits: alpha(3), beta(3), gamma(1), delta(1), epsilon(1). CF(0) has three main subunits: a, b and c.

It localises to the cell inner membrane. Produces ATP from ADP in the presence of a proton gradient across the membrane. The gamma chain is believed to be important in regulating ATPase activity and the flow of protons through the CF(0) complex. The protein is ATP synthase gamma chain of Desulforapulum autotrophicum (strain ATCC 43914 / DSM 3382 / VKM B-1955 / HRM2) (Desulfobacterium autotrophicum).